Here is a 494-residue protein sequence, read N- to C-terminus: Fumarate hydratase, mitochondrial (494 aa).

The transit peptide at 1 to 15 directs the protein to the mitochondrion; that stretch reads MLRASATRFLSQAKN. Substrate is bound by residues 128-130, 159-162, 169-171, and threonine 217; these read SGT, HPND, and SSN. The active-site Proton donor/acceptor is histidine 218. Serine 348 is a catalytic residue. Substrate is bound by residues serine 349 and 354–356; that span reads KVN.

This sequence belongs to the class-II fumarase/aspartase family. Fumarase subfamily. As to quaternary structure, homotetramer.

Its subcellular location is the mitochondrion matrix. The protein resides in the cytoplasm. The protein localises to the nucleus. It carries out the reaction (S)-malate = fumarate + H2O. The protein operates within carbohydrate metabolism; tricarboxylic acid cycle; (S)-malate from fumarate: step 1/1. Catalyzes the reversible stereospecific interconversion of fumarate to L-malate. In mitochondrion, catalyzes the hydration of fumarate to L-malate in the tricarboxylic acid (TCA) cycle to facilitate a transition step in the production of energy in the form of NADH. In cytoplasm and nucleus, involved in DNA repair in response to DNA damage: following DNA double-strand breaks (DSBs), translocates from the cytosol to the nucleus and promotes DNA repair by catalyzing the dehydration of L-malate to fumarate. The sequence is that of Fumarate hydratase, mitochondrial from Rhizopus oryzae (Mucormycosis agent).